Here is a 535-residue protein sequence, read N- to C-terminus: Succinate-semialdehyde dehydrogenase, mitochondrial (535 aa).

The transit peptide at 1–47 (MATCIWLRSCGARRLGWTFPGCRLRPRAGGLVPASGPAPGPAQLRCY) directs the protein to the mitochondrion. Lys-126 is subject to N6-acetyllysine; alternate. An N6-succinyllysine; alternate modification is found at Lys-126. Residues Lys-135 and Lys-184 each carry the N6-succinyllysine modification. Residues Arg-213 and 228–231 (KPAE) contribute to the NAD(+) site. Arg-213 lines the substrate pocket. Residue Lys-265 is modified to N6-acetyllysine; alternate. An N6-succinyllysine; alternate modification is found at Lys-265. An NAD(+)-binding site is contributed by 284–289 (GSTTTG). Glu-306 acts as the Proton acceptor in catalysis. Arg-334 lines the substrate pocket. The Nucleophile role is filled by Cys-340. Cys-340 and Cys-342 are oxidised to a cystine. Position 365 is an N6-acetyllysine (Lys-365). At Lys-402 the chain carries N6-succinyllysine. Lys-411 carries the post-translational modification N6-acetyllysine. Ser-498 contributes to the substrate binding site. At Ser-499 the chain carries Phosphoserine.

The protein belongs to the aldehyde dehydrogenase family. As to quaternary structure, homotetramer.

The protein localises to the mitochondrion. It carries out the reaction succinate semialdehyde + NAD(+) + H2O = succinate + NADH + 2 H(+). It functions in the pathway amino-acid degradation; 4-aminobutanoate degradation. Redox-regulated. Inhibited under oxydizing conditions. In terms of biological role, catalyzes one step in the degradation of the inhibitory neurotransmitter gamma-aminobutyric acid (GABA). This is Succinate-semialdehyde dehydrogenase, mitochondrial (ALDH5A1) from Pan paniscus (Pygmy chimpanzee).